A 265-amino-acid polypeptide reads, in one-letter code: Hydroxyethylthiazole kinase (265 aa).

Met50 contributes to the substrate binding site. The ATP site is built by Arg125 and Thr171. Residue Gly198 participates in substrate binding.

It belongs to the Thz kinase family. Mg(2+) is required as a cofactor.

It catalyses the reaction 5-(2-hydroxyethyl)-4-methylthiazole + ATP = 4-methyl-5-(2-phosphooxyethyl)-thiazole + ADP + H(+). Its pathway is cofactor biosynthesis; thiamine diphosphate biosynthesis; 4-methyl-5-(2-phosphoethyl)-thiazole from 5-(2-hydroxyethyl)-4-methylthiazole: step 1/1. Its function is as follows. Catalyzes the phosphorylation of the hydroxyl group of 4-methyl-5-beta-hydroxyethylthiazole (THZ). This Salmonella newport (strain SL254) protein is Hydroxyethylthiazole kinase.